The chain runs to 148 residues: 3-hydroxyacyl-[acyl-carrier-protein] dehydratase FabZ (148 aa).

The active site involves His47.

The protein belongs to the thioester dehydratase family. FabZ subfamily.

The protein localises to the cytoplasm. The catalysed reaction is a (3R)-hydroxyacyl-[ACP] = a (2E)-enoyl-[ACP] + H2O. Involved in unsaturated fatty acids biosynthesis. Catalyzes the dehydration of short chain beta-hydroxyacyl-ACPs and long chain saturated and unsaturated beta-hydroxyacyl-ACPs. This Hydrogenobaculum sp. (strain Y04AAS1) protein is 3-hydroxyacyl-[acyl-carrier-protein] dehydratase FabZ.